The following is a 552-amino-acid chain: MSSPRLQQQFIRLWQHFQGQTTDTTLQELTGVLNCSRRHIRSLLNAMQLEGWLIWQAEAGRGKRSQLSFVYTGLALQQQRAEDLLEQDRIEQLVQLVGDKEAVRQMLLSHLGRSFRQGKHILRILYYRPLRNLLPSSALRRSEMHIARQIFSGLTNINEENGELKPDLAHHWQMLAPLHWRFYLRPAIRFHHGRELTMDDITTSLSRLIPLPLFSHIEAVNSPMPFVIDIRLSSPDKWLPWLLASVHAMILPQEWQTLPNFAQHPIGTGPYAVVRNNSSQLKIRAFDDYFGYRALIDEVNIWVLPDEPEEMPVSVQFQSDDSHHEQLESRMEEGGYFLLFDKRSPLNQRPEALRWLRQVFNPVSLLSHANTSNQRDWSPAYSLLPRWHHHHPDTPQSIPDGLTDVTLTFYQEHPEYRILSEIMRTLLAQQGVTLHLQTISYEDWYQGNAESDIWFGSLNCYLPLEFSLFAMLYELPLVQHCLNDDLDTDAQQWRSHTLPMAEWCEKLIKSGQLHPLLHHWLQLQGQRSMRGVRMNMLGWFDFKSAWFAPPER.

Positions 163 to 493 (ELKPDLAHHW…DDLDTDAQQW (331 aa)) are solute-binding.

Activates the small RNA gene sgrS under glucose-phosphate stress conditions as well as yfdZ. Represses its own transcription under both stress and non-stress conditions. Might act as a sensor of the intracellular accumulation of phosphoglucose by binding these molecules in its C-terminal solute-binding domain. The sequence is that of HTH-type transcriptional regulator SgrR from Pectobacterium atrosepticum (strain SCRI 1043 / ATCC BAA-672) (Erwinia carotovora subsp. atroseptica).